The primary structure comprises 757 residues: Catalase-peroxidase (757 aa).

The segment at residues 101–248 (WHSAGTYRIG…LAAVQMGLIY (148 aa)) is a cross-link (tryptophyl-tyrosyl-methioninium (Trp-Tyr) (with M-274)). H102 functions as the Proton acceptor in the catalytic mechanism. Positions 210–231 (SEGVHHPDEHSGAKEKASKNSD) are disordered. Residues 212-231 (GVHHPDEHSGAKEKASKNSD) show a composition bias toward basic and acidic residues. A cross-link (tryptophyl-tyrosyl-methioninium (Tyr-Met) (with W-101)) is located at residues 248 to 274 (YVNPEGPDGRPDPLASARDIRETFARM). H289 provides a ligand contact to heme b. The segment at 293–312 (KTHGAAPADNVGPEPEAGEL) is disordered.

It belongs to the peroxidase family. Peroxidase/catalase subfamily. Homodimer or homotetramer. Heme b is required as a cofactor. Formation of the three residue Trp-Tyr-Met cross-link is important for the catalase, but not the peroxidase activity of the enzyme.

The catalysed reaction is H2O2 + AH2 = A + 2 H2O. The enzyme catalyses 2 H2O2 = O2 + 2 H2O. Functionally, bifunctional enzyme with both catalase and broad-spectrum peroxidase activity. The chain is Catalase-peroxidase from Xylella fastidiosa (strain M12).